The primary structure comprises 247 residues: Mast cell protease 2 (247 aa).

An N-terminal signal peptide occupies residues 1 to 18; the sequence is MQALLFLMALLLPSGAGA. Residues 19–20 constitute a propeptide, activation peptide; it reads EE. The Peptidase S1 domain occupies 21–244; the sequence is IIGGVESIPH…YVPWINAVIN (224 aa). C50 and C66 are joined by a disulfide. Catalysis depends on charge relay system residues H65 and D109. 2 disulfides stabilise this stretch: C143/C208 and C174/C187. S202 serves as the catalytic Charge relay system.

This sequence belongs to the peptidase S1 family. Granzyme subfamily.

In terms of biological role, this enzyme, isolated from small intestine, specifically inactivates the apo forms of a certain group of intracellular pyridoxal phosphate-requiring enzymes. It has chymotrypsin-like specificity towards small substrates. This Rattus norvegicus (Rat) protein is Mast cell protease 2 (Mcpt2).